Here is a 227-residue protein sequence, read N- to C-terminus: 7-cyano-7-deazaguanine synthase (227 aa).

Residue 7 to 17 coordinates ATP; the sequence is LSGGLDSSTIL. 4 residues coordinate Zn(2+): cysteine 191, cysteine 199, cysteine 202, and cysteine 205.

The protein belongs to the QueC family. Zn(2+) serves as cofactor.

The catalysed reaction is 7-carboxy-7-deazaguanine + NH4(+) + ATP = 7-cyano-7-deazaguanine + ADP + phosphate + H2O + H(+). It functions in the pathway purine metabolism; 7-cyano-7-deazaguanine biosynthesis. Functionally, catalyzes the ATP-dependent conversion of 7-carboxy-7-deazaguanine (CDG) to 7-cyano-7-deazaguanine (preQ(0)). This chain is 7-cyano-7-deazaguanine synthase, found in Trichormus variabilis (strain ATCC 29413 / PCC 7937) (Anabaena variabilis).